A 374-amino-acid polypeptide reads, in one-letter code: Heme A synthase (374 aa).

The tract at residues 1–22 (MSDHIRAASSPSRHGSEHGWQH) is disordered. Helical transmembrane passes span 32 to 52 (ILVA…VMLG), 118 to 138 (RLWG…LAVT), 149 to 169 (LILI…MVAS), 184 to 204 (VVHL…ALSV), and 226 to 246 (LGLV…HAGL). H281 contributes to the heme binding site. Transmembrane regions (helical) follow at residues 283–300 (LLAT…LIGF), 309–329 (AVLP…ATLL), and 332–352 (VAVP…TAAI). H340 contacts heme.

The protein belongs to the COX15/CtaA family. Type 2 subfamily. In terms of assembly, interacts with CtaB. Heme b is required as a cofactor.

It localises to the cell membrane. The catalysed reaction is Fe(II)-heme o + 2 A + H2O = Fe(II)-heme a + 2 AH2. The protein operates within porphyrin-containing compound metabolism; heme A biosynthesis; heme A from heme O: step 1/1. Its function is as follows. Catalyzes the conversion of heme O to heme A by two successive hydroxylations of the methyl group at C8. The first hydroxylation forms heme I, the second hydroxylation results in an unstable dihydroxymethyl group, which spontaneously dehydrates, resulting in the formyl group of heme A. The protein is Heme A synthase of Granulibacter bethesdensis (strain ATCC BAA-1260 / CGDNIH1).